The sequence spans 387 residues: MSNYLFTSESVSEGHPDKVADQISDAILDAILQQDPHARVACETMCSTGLIVLSGEITTDATIDYNAIPRGIVREIGYTSSEIGFDASTCAVLTAFNKQSPDIAQGVNRSKDEEMDQGAGDQGLMFGYACDETPQLMPLPIYYAHRLVEQQAKLRKSGRLSWLRPDAKSQVSVRYEDGFPKNIETIVISTQHSPDVPRDELVEGVIEEVIKPVLPAEMLSNHIQYLINPTGRFVVGGPMGDCGLTGRKIIVDTYGGTAHHGGGAFSGKDPSKVDRSAAYAARYVAKNIVAAGLARKCEVQVAYAIGVAKPVSLMVQTFGTGKIPDGKLAELIARHFDLRPRAIIHELDLLRPIYGKTAAYGHFGREEPSFTWEKTDMAEQLKADAGI.

H15 lines the ATP pocket. D17 lines the Mg(2+) pocket. E43 lines the K(+) pocket. L-methionine contacts are provided by E56 and Q99. Positions 99–109 (QSPDIAQGVNR) are flexible loop. Residues 166–168 (DAK), 232–233 (RF), D241, 247–248 (RK), A264, and K268 each bind ATP. D241 serves as a coordination point for L-methionine. K272 is an L-methionine binding site.

It belongs to the AdoMet synthase family. Homotetramer; dimer of dimers. Requires Mg(2+) as cofactor. The cofactor is K(+).

Its subcellular location is the cytoplasm. The enzyme catalyses L-methionine + ATP + H2O = S-adenosyl-L-methionine + phosphate + diphosphate. The protein operates within amino-acid biosynthesis; S-adenosyl-L-methionine biosynthesis; S-adenosyl-L-methionine from L-methionine: step 1/1. Catalyzes the formation of S-adenosylmethionine (AdoMet) from methionine and ATP. The overall synthetic reaction is composed of two sequential steps, AdoMet formation and the subsequent tripolyphosphate hydrolysis which occurs prior to release of AdoMet from the enzyme. This chain is S-adenosylmethionine synthase, found in Nitrosomonas europaea (strain ATCC 19718 / CIP 103999 / KCTC 2705 / NBRC 14298).